Here is a 56-residue protein sequence, read N- to C-terminus: Large ribosomal subunit protein bL33C (56 aa).

It belongs to the bacterial ribosomal protein bL33 family.

This is Large ribosomal subunit protein bL33C from Sorangium cellulosum (strain So ce56) (Polyangium cellulosum (strain So ce56)).